Consider the following 297-residue polypeptide: Protein CANDIDATE G-PROTEIN COUPLED RECEPTOR 8 (297 aa).

N-linked (GlcNAc...) asparagine glycosylation is present at Asn-20. The next 7 helical transmembrane spans lie at 34–54 (GFLH…YLAY), 70–90 (IMIA…AWCC), 107–127 (LTLF…AFLF), 142–162 (FLIS…FLFG), 180–200 (WGLW…VFLM), 215–235 (FYNY…ASAF), and 242–262 (FGFW…LPLL).

This sequence belongs to the UPF0359 family.

It is found in the membrane. In terms of biological role, G-protein coupled receptor. Plays a role in plants and microbes interactions. The protein is Protein CANDIDATE G-PROTEIN COUPLED RECEPTOR 8 of Arabidopsis thaliana (Mouse-ear cress).